A 92-amino-acid chain; its full sequence is Small ribosomal subunit protein uS19 (92 aa).

Belongs to the universal ribosomal protein uS19 family.

Its function is as follows. Protein S19 forms a complex with S13 that binds strongly to the 16S ribosomal RNA. This Bacillus cereus (strain B4264) protein is Small ribosomal subunit protein uS19.